The primary structure comprises 132 residues: Small ribosomal subunit protein uS11c (132 aa).

It belongs to the universal ribosomal protein uS11 family. In terms of assembly, part of the 30S ribosomal subunit.

The protein resides in the plastid. It localises to the chloroplast. The polypeptide is Small ribosomal subunit protein uS11c (Cryptomeria japonica (Japanese cedar)).